A 149-amino-acid polypeptide reads, in one-letter code: Ribose-5-phosphate isomerase B (149 aa).

Residue 9-10 participates in D-ribulose 5-phosphate binding; it reads DH. Cysteine 66 serves as the catalytic Proton acceptor. 67 to 71 contacts D-ribulose 5-phosphate; it reads GTGVG. Histidine 99 acts as the Proton donor in catalysis. D-ribulose 5-phosphate-binding residues include asparagine 100, arginine 110, arginine 133, and arginine 137.

This sequence belongs to the LacAB/RpiB family. In terms of assembly, homodimer, and homotetramer.

It catalyses the reaction aldehydo-D-ribose 5-phosphate = D-ribulose 5-phosphate. It carries out the reaction D-allose 6-phosphate = D-allulose 6-phosphate. It participates in carbohydrate degradation; pentose phosphate pathway; D-ribose 5-phosphate from D-ribulose 5-phosphate (non-oxidative stage): step 1/1. With respect to regulation, inhibited by iodoacetate and glucose 6-phosphate. Its function is as follows. Catalyzes the interconversion of ribulose-5-P and ribose-5-P. It probably also has activity on D-allose 6-phosphate. This is Ribose-5-phosphate isomerase B from Escherichia coli (strain K12).